We begin with the raw amino-acid sequence, 459 residues long: Cysteine--tRNA ligase (459 aa).

Zn(2+) is bound at residue Cys29. A 'HIGH' region motif is present at residues 31 to 41 (PTVYNLVHIGN). 3 residues coordinate Zn(2+): Cys209, His234, and Glu238. The short motif at 267 to 271 (KMSKS) is the 'KMSKS' region element. Position 270 (Lys270) interacts with ATP.

This sequence belongs to the class-I aminoacyl-tRNA synthetase family. In terms of assembly, monomer. Zn(2+) serves as cofactor.

The protein localises to the cytoplasm. It carries out the reaction tRNA(Cys) + L-cysteine + ATP = L-cysteinyl-tRNA(Cys) + AMP + diphosphate. This Saccharophagus degradans (strain 2-40 / ATCC 43961 / DSM 17024) protein is Cysteine--tRNA ligase.